The following is an 876-amino-acid chain: Valine--tRNA ligase (876 aa).

The 'HIGH' region signature appears at 44–54 (PNVTGKLHLGH). Positions 520–524 (KMSKS) match the 'KMSKS' region motif. Lys523 provides a ligand contact to ATP. Positions 805 to 876 (LEGLIDMDKE…VKARIEQLKA (72 aa)) form a coiled coil.

Belongs to the class-I aminoacyl-tRNA synthetase family. ValS type 1 subfamily. As to quaternary structure, monomer.

The protein resides in the cytoplasm. The enzyme catalyses tRNA(Val) + L-valine + ATP = L-valyl-tRNA(Val) + AMP + diphosphate. In terms of biological role, catalyzes the attachment of valine to tRNA(Val). As ValRS can inadvertently accommodate and process structurally similar amino acids such as threonine, to avoid such errors, it has a 'posttransfer' editing activity that hydrolyzes mischarged Thr-tRNA(Val) in a tRNA-dependent manner. The protein is Valine--tRNA ligase of Staphylococcus aureus (strain bovine RF122 / ET3-1).